A 431-amino-acid polypeptide reads, in one-letter code: Mitochondrial distribution and morphology protein 12 (431 aa).

One can recognise an SMP-LTD domain in the interval 1-431 (MSIDLNWETL…VYPSFWTFLV (431 aa)). 2 disordered regions span residues 68–153 (DFYE…GVST) and 209–289 (QSHT…PKPE). Over residues 69–96 (FYEDLDDDDGGSDEDDEGSNSCQTDEEN) the composition is skewed to acidic residues. Over residues 97–113 (EAAKTLRERRKMDRVER) the composition is skewed to basic and acidic residues. Positions 115–129 (ANGSSNVSNPPSYTD) are enriched in polar residues. Positions 241–252 (SASTLAVSSSTT) are enriched in low complexity.

It belongs to the MDM12 family. In terms of assembly, component of the ER-mitochondria encounter structure (ERMES) or MDM complex, composed of mmm1, mdm10, mdm12 and mdm34. A mmm1 homodimer associates with one molecule of mdm12 on each side in a pairwise head-to-tail manner, and the SMP-LTD domains of mmm1 and mdm12 generate a continuous hydrophobic tunnel for phospholipid trafficking.

The protein localises to the mitochondrion outer membrane. The protein resides in the endoplasmic reticulum membrane. In terms of biological role, component of the ERMES/MDM complex, which serves as a molecular tether to connect the endoplasmic reticulum (ER) and mitochondria. Components of this complex are involved in the control of mitochondrial shape and protein biogenesis, and function in nonvesicular lipid trafficking between the ER and mitochondria. Mdm12 is required for the interaction of the ER-resident membrane protein mmm1 and the outer mitochondrial membrane-resident beta-barrel protein mdm10. The mdm12-mmm1 subcomplex functions in the major beta-barrel assembly pathway that is responsible for biogenesis of all mitochondrial outer membrane beta-barrel proteins, and acts in a late step after the SAM complex. The mdm10-mdm12-mmm1 subcomplex further acts in the TOM40-specific pathway after the action of the mdm12-mmm1 complex. Essential for establishing and maintaining the structure of mitochondria and maintenance of mtDNA nucleoids. This is Mitochondrial distribution and morphology protein 12 from Sclerotinia sclerotiorum (strain ATCC 18683 / 1980 / Ss-1) (White mold).